The chain runs to 777 residues: MTRKSSNRSRGRKARSGKSASSSKLQIWLGRIWSIGWKLALTLAAVLVFIGIYLDSMIKQRFEGQLFDLPTVVYARILTLEPGNGLSLQELRNELDVLNYRKVAQPRFPGEYASSSSRIELIRRPFEFADGPEPDRRVMLTFDGSGLNKIESLEQKRELGYLRLEPKLMGMLEKDSPEQRLFLRRDQFPEVLVDALLVTEDRDFYQHDGVSPLAIGRAMVVNLKAGRTVQGGSTLTQQLAKNIFLSSDRTLWRKLREAYMALIIDYRYSKDRILEAYLNEVYLGQSGADAIHGFGLASRLYFGQPLQELRIDQLALLVGMVKGPSYYNPMRYAERARERRDLVLKLMMEHDILTAPEYQQAVTRPLDVQKTAQIASRQPAYFQQVSIELKEKLGDKFKADSGLRVFTSLDPVSQSKLEQAIHDQIPQLAKTAGKDLEAAAIAVDRHSGEIRAMVGGKRTGYDGFNRVLNASRQIGSLVKPAVYLTALAHPDQYNLATTLEDKPLTLKGSEGSAWTPRNYDRQYRGEVPLYLALAQSLNVPTVALGMKLGIDQVSATLGKLGVNRDEIRPVPSMLLGSFSLTPYQVAQMYQTLTNSGKKAPLSALRSVLDLEGNVLYESLPRVSQAVDQQAAWLTTYAMKQGVQEGTGRYLNAQFSSAALAGKTGTTNDNRDSWFVGVDGREVTTIWLGRDDNQPTKLTGASGALRVYAQYLKYRIPEKLQLPWPEGITTFGFAKQTQGGLKLDCDNAFKLPIWDNQQQLKQQCENRPTEWIKKLFEW.

Residues methionine 1–glycine 30 lie on the Cytoplasmic side of the membrane. A helical; Signal-anchor for type II membrane protein transmembrane segment spans residues arginine 31–isoleucine 52. Residues tyrosine 53–tryptophan 777 lie on the Periplasmic side of the membrane. Residues leucine 162–glutamate 334 are transglycosylase. Residue glutamate 200 is the Proton donor; for transglycosylase activity of the active site. The tract at residues serine 415–glutamine 709 is transpeptidase. Catalysis depends on serine 476, which acts as the Acyl-ester intermediate; for transpeptidase activity.

This sequence in the N-terminal section; belongs to the glycosyltransferase 51 family. In the C-terminal section; belongs to the transpeptidase family.

The protein localises to the cell inner membrane. It carries out the reaction [GlcNAc-(1-&gt;4)-Mur2Ac(oyl-L-Ala-gamma-D-Glu-L-Lys-D-Ala-D-Ala)](n)-di-trans,octa-cis-undecaprenyl diphosphate + beta-D-GlcNAc-(1-&gt;4)-Mur2Ac(oyl-L-Ala-gamma-D-Glu-L-Lys-D-Ala-D-Ala)-di-trans,octa-cis-undecaprenyl diphosphate = [GlcNAc-(1-&gt;4)-Mur2Ac(oyl-L-Ala-gamma-D-Glu-L-Lys-D-Ala-D-Ala)](n+1)-di-trans,octa-cis-undecaprenyl diphosphate + di-trans,octa-cis-undecaprenyl diphosphate + H(+). The enzyme catalyses Preferential cleavage: (Ac)2-L-Lys-D-Ala-|-D-Ala. Also transpeptidation of peptidyl-alanyl moieties that are N-acyl substituents of D-alanine.. The protein operates within cell wall biogenesis; peptidoglycan biosynthesis. Cell wall formation. Synthesis of cross-linked peptidoglycan from the lipid intermediates. The enzyme has a penicillin-insensitive transglycosylase N-terminal domain (formation of linear glycan strands) and a penicillin-sensitive transpeptidase C-terminal domain (cross-linking of the peptide subunits). This Vibrio cholerae serotype O1 (strain ATCC 39315 / El Tor Inaba N16961) protein is Penicillin-binding protein 1B (mrcB).